The sequence spans 121 residues: Large ribosomal subunit protein bL12 (121 aa).

It belongs to the bacterial ribosomal protein bL12 family. As to quaternary structure, homodimer. Part of the ribosomal stalk of the 50S ribosomal subunit. Forms a multimeric L10(L12)X complex, where L10 forms an elongated spine to which 2 to 4 L12 dimers bind in a sequential fashion. Binds GTP-bound translation factors.

In terms of biological role, forms part of the ribosomal stalk which helps the ribosome interact with GTP-bound translation factors. Is thus essential for accurate translation. The protein is Large ribosomal subunit protein bL12 of Enterobacter sp. (strain 638).